Here is a 311-residue protein sequence, read N- to C-terminus: UDP-N-acetylenolpyruvoylglucosamine reductase (311 aa).

The FAD-binding PCMH-type domain maps to 29–191 (IGGKADIVLK…LSARLKLKPI (163 aa)). The active site involves Arg-172. Ser-223 serves as the catalytic Proton donor. The active site involves Glu-299.

The protein belongs to the MurB family. The cofactor is FAD.

The protein localises to the cytoplasm. It carries out the reaction UDP-N-acetyl-alpha-D-muramate + NADP(+) = UDP-N-acetyl-3-O-(1-carboxyvinyl)-alpha-D-glucosamine + NADPH + H(+). It participates in cell wall biogenesis; peptidoglycan biosynthesis. Functionally, cell wall formation. This chain is UDP-N-acetylenolpyruvoylglucosamine reductase, found in Chloroherpeton thalassium (strain ATCC 35110 / GB-78).